The sequence spans 91 residues: uncharacterized protein (91 aa).

The next 3 membrane-spanning stretches (helical) occupy residues 9 to 29 (VLWG…PFLP), 44 to 64 (LTVN…VFAW), and 71 to 91 (QFVF…CLAL).

Its subcellular location is the cell membrane. This is an uncharacterized protein from Bacillus subtilis (strain 168).